Consider the following 109-residue polypeptide: Phycoerythrin alpha-2 subunit (109 aa).

Residues aspartate 52, serine 53, glutamate 63, arginine 64, cysteine 67, threonine 72, lysine 74, alanine 75, and lysine 84 each coordinate (2R,3E)-phycoerythrobilin.

This sequence belongs to the phycoerythrin family. As to quaternary structure, heterotetramer of 2 different alpha chains and 2 identical beta chains which form 2 alpha-beta heterodimers within the heterotetramer. The two alpha-beta heterodimers are rotated to an open configuration in contrast to the closed configuration found in other cryptophyte species due to the insertion of a single amino acid, Asp-65, in a conserved region of the alpha chain. In the open form, the central chromophores are not in physical contact but are separated by a water-filled channel. Contains three phycoerythrobilin chromophores with binding mediated by both the alpha and beta subunits.

It is found in the plastid. Its subcellular location is the chloroplast thylakoid membrane. In terms of biological role, light-harvesting photosynthetic tetrapyrrole chromophore-protein from the phycobiliprotein complex. The chain is Phycoerythrin alpha-2 subunit from Hemiselmis andersenii (Cryptophyte alga).